The sequence spans 595 residues: Elongation factor 4 2 (595 aa).

Residues 4-187 form the tr-type G domain; the sequence is SHIRNFAIIA…AIKQRLPAPQ (184 aa). GTP contacts are provided by residues 16-21 and 133-136; these read DHGKST and NKVD.

The protein belongs to the TRAFAC class translation factor GTPase superfamily. Classic translation factor GTPase family. LepA subfamily.

It localises to the cell membrane. The catalysed reaction is GTP + H2O = GDP + phosphate + H(+). In terms of biological role, required for accurate and efficient protein synthesis under certain stress conditions. May act as a fidelity factor of the translation reaction, by catalyzing a one-codon backward translocation of tRNAs on improperly translocated ribosomes. Back-translocation proceeds from a post-translocation (POST) complex to a pre-translocation (PRE) complex, thus giving elongation factor G a second chance to translocate the tRNAs correctly. Binds to ribosomes in a GTP-dependent manner. This Lactiplantibacillus plantarum (strain ATCC BAA-793 / NCIMB 8826 / WCFS1) (Lactobacillus plantarum) protein is Elongation factor 4 2.